A 306-amino-acid polypeptide reads, in one-letter code: 2-dehydro-3-deoxy-D-gluconate/2-dehydro-3-deoxy-phosphogluconate aldolase (306 aa).

Substrate is bound by residues 61–62 (TT), 148–150 (YNY), and 173–175 (KDT). Catalysis depends on Lys-173, which acts as the Schiff-base intermediate with substrate.

Belongs to the DapA family. KDPG aldolase subfamily. Homotetramer; dimer of dimers.

It carries out the reaction 2-dehydro-3-deoxy-6-phospho-D-gluconate = D-glyceraldehyde 3-phosphate + pyruvate. It catalyses the reaction 2-dehydro-3-deoxy-D-gluconate = D-glyceraldehyde + pyruvate. The protein operates within carbohydrate acid metabolism; 2-dehydro-3-deoxy-D-gluconate degradation; D-glyceraldehyde 3-phosphate and pyruvate from 2-dehydro-3-deoxy-D-gluconate: step 2/2. Involved in the degradation of glucose via the Entner-Doudoroff pathway. Catalyzes the reversible cleavage of 2-keto-3-deoxy-6-phosphogluconate (KDPG) and 2-keto-3-deoxygluconate (KDG) forming pyruvate and glyceraldehyde 3-phosphate or glyceraldehyde, respectively. It is not able to use 2-keto-3-deoxy-6-phosphogalactonate (KDPGal) and 2-keto-3-deoxygalactonate (KDGal) as substrate. The protein is 2-dehydro-3-deoxy-D-gluconate/2-dehydro-3-deoxy-phosphogluconate aldolase (kdgA) of Thermoproteus tenax.